We begin with the raw amino-acid sequence, 268 residues long: L-proline trans-4-hydroxylase (268 aa).

Fe cation-binding residues include H113, D115, and H218.

This sequence belongs to the PhyH family. In terms of assembly, monomer. Fe(2+) serves as cofactor.

The enzyme catalyses L-proline + 2-oxoglutarate + O2 = trans-4-hydroxy-L-proline + succinate + CO2. Its pathway is antibiotic biosynthesis. Competitively inhibited by pyridine-2,4-dicarboxylate. Inhibited by diethyl pyrocarbonate (DEPC), 3,4-dihydroxybenzoate, pyridine-2,5-dicarboxylate, alpha,alpha'-dipyridyl, and some metal ions such as Co(2+) and Zn(2+). Its function is as follows. Involved in the biosynthesis of the peptidolactone antibiotic etamycin (viridogrisein). Catalyzes the hydroxylation of free L-proline at the C-4 position to yield trans-4-hydroxy-L-proline. In Streptomyces griseoviridis, this protein is L-proline trans-4-hydroxylase.